A 163-amino-acid chain; its full sequence is Cytochrome b6-f complex subunit 4 (163 aa).

3 consecutive transmembrane segments (helical) span residues 36–56, 95–115, and 131–151; these read LLYI…GLAV, LLGV…PFLE, and TVFL…TLPI.

The protein belongs to the cytochrome b family. PetD subfamily. The 4 large subunits of the cytochrome b6-f complex are cytochrome b6, subunit IV (17 kDa polypeptide, petD), cytochrome f and the Rieske protein, while the 4 small subunits are petG, petL, petM and petN. The complex functions as a dimer.

It is found in the plastid. It localises to the chloroplast thylakoid membrane. Its function is as follows. Component of the cytochrome b6-f complex, which mediates electron transfer between photosystem II (PSII) and photosystem I (PSI), cyclic electron flow around PSI, and state transitions. The polypeptide is Cytochrome b6-f complex subunit 4 (Drimys granadensis).